The following is a 175-amino-acid chain: MTTIVSVRRNGQVVVGGDGQVSLGNTVMKGNARKVRRLYNGKVLAGFAGGTADAFTLFELFERKLEMHQGHLLKSAVELAKDWRTDRALRKLEAMLIVADEKESLIITGIGDVVQPEEDQILAIGSGGNYALSAARALVENTELSAREIVEKSLRIAGDICVFTNTNFTIEELPN.

The active site involves T2. G158, C161, and T164 together coordinate Na(+).

It belongs to the peptidase T1B family. HslV subfamily. In terms of assembly, a double ring-shaped homohexamer of HslV is capped on each side by a ring-shaped HslU homohexamer. The assembly of the HslU/HslV complex is dependent on binding of ATP.

Its subcellular location is the cytoplasm. The catalysed reaction is ATP-dependent cleavage of peptide bonds with broad specificity.. Its activity is regulated as follows. Allosterically activated by HslU binding. In terms of biological role, protease subunit of a proteasome-like degradation complex believed to be a general protein degrading machinery. The protein is ATP-dependent protease subunit HslV of Haemophilus influenzae (strain PittGG).